Reading from the N-terminus, the 626-residue chain is MFKNAKEFVQYANKLKTLREKKLNGVSIYVCVGTGCTAKGALKVYSAFEEELKKRNLLGQVTLEKIDDDKVTLNRTGCCGRCSSGPLVKIMPYRFFYSNVAPEDVPEIVDRTVLKGEPIERLFLTDPLTGEKVPRIEDTTLFKNQDFYIMEAIGESECDSIEDYIARSGYESLVKALTSMTPEEIIETVKASGLRGRGGGGFPTGLKWEFTRKAQGDIKFVVCNGDEGDPGAFMNRTLLERDPHLVLEGMIIAGYAVGAQKGYAYIRAEYPFAVKMFKKAIEDARKLGLLGENILGTGFSFDLEVKEGAGAFVCGEETALLASIEGKRGMPRPKPPFPAQSGLWGKPTLINNVETYANIPRILRDGVENYRKRGTENSPGTKMFSVAGPLKATGIIEVEFGTTLRDIIYNICGGFVEGEEFKAVQIGGPSGACLSEDFIDMPLDYDTLKKADAMVGSGGIVVITKKTCMVEVARFFLDFTKRESCGKCVPCREGTMQAYNILEKFTHGKATYEDLKTLEHLSKTIKTASLCGLGKTAPNPILSTLKLFREEYIAHIEGECPSGMCTAFKKYVINPDICKGCGLCARSCPQNAITGERGKPYTIDQEKCVKCGLCASKCPFKAIELV.

NAD(+) is bound at residue 198–201 (GGGG). FMN is bound by residues Lys-207 and 224–228 (NGDEG). Asp-229 contributes to the NAD(+) binding site. Residues 312–317 (FVCGEE) and 350–352 (INN) contribute to the FMN site. Positions 485, 488, 491, 531, 578, 581, 584, 588, 608, 611, 614, and 618 each coordinate [4Fe-4S] cluster. 4Fe-4S ferredoxin-type domains follow at residues 569 to 598 (KKYV…GERG) and 599 to 626 (KPYT…IELV).

It belongs to the complex I 51 kDa subunit family. As to quaternary structure, heterotrimer composed of HydA (alpha subunit), HydB (beta subunit) and HydC (gamma subunit). Near neutral and acidic pH conditions favor oligomerization of the heterotrimeric holoenzyme. [2Fe-2S] cluster serves as cofactor. Requires [4Fe-4S] cluster as cofactor. FMN is required as a cofactor.

It localises to the cytoplasm. The catalysed reaction is 2 H2 + 2 oxidized [2Fe-2S]-[ferredoxin] + NAD(+) = 2 reduced [2Fe-2S]-[ferredoxin] + NADH + 3 H(+). Functionally, catalyzes the oxidation of the physiological electron carriers NADH and reduced ferredoxin, coupled to the production of H(2). Acts as a bifurcating [FeFe] hydrogenase, which uses the exergonic oxidation of reduced ferredoxin to drive the unfavorable oxidation of NADH to produce H(2). The beta subunit contains flavin- and NAD-binding sites and is potentially the site for NADH oxidation, with the subsequent shuttling of electrons to the alpha subunit. This is Bifurcating [FeFe] hydrogenase beta subunit from Thermotoga maritima (strain ATCC 43589 / DSM 3109 / JCM 10099 / NBRC 100826 / MSB8).